The sequence spans 251 residues: Hydroxyacylglutathione hydrolase (251 aa).

Zn(2+) contacts are provided by His-53, His-55, Asp-57, His-58, His-110, Asp-127, and His-165.

The protein belongs to the metallo-beta-lactamase superfamily. Glyoxalase II family. Monomer. Zn(2+) is required as a cofactor.

It catalyses the reaction an S-(2-hydroxyacyl)glutathione + H2O = a 2-hydroxy carboxylate + glutathione + H(+). The protein operates within secondary metabolite metabolism; methylglyoxal degradation; (R)-lactate from methylglyoxal: step 2/2. In terms of biological role, thiolesterase that catalyzes the hydrolysis of S-D-lactoyl-glutathione to form glutathione and D-lactic acid. This Escherichia coli (strain UTI89 / UPEC) protein is Hydroxyacylglutathione hydrolase.